Reading from the N-terminus, the 344-residue chain is GTP 3',8-cyclase (344 aa).

One can recognise a Radical SAM core domain in the interval 19–239; the sequence is PFGRTIDYLR…ANYTLTDLPD (221 aa). Residue Arg28 coordinates GTP. The [4Fe-4S] cluster site is built by Cys35 and Cys39. Position 41 (Tyr41) interacts with S-adenosyl-L-methionine. [4Fe-4S] cluster is bound at residue Cys42. Residue Arg77 participates in GTP binding. Gly81 contacts S-adenosyl-L-methionine. Residue Thr111 coordinates GTP. Ser135 contacts S-adenosyl-L-methionine. Lys171 contributes to the GTP binding site. Met205 contributes to the S-adenosyl-L-methionine binding site. Residues Cys268 and Cys271 each contribute to the [4Fe-4S] cluster site. 273-275 serves as a coordination point for GTP; sequence RVR. Residue Cys285 participates in [4Fe-4S] cluster binding.

Belongs to the radical SAM superfamily. MoaA family. As to quaternary structure, monomer and homodimer. [4Fe-4S] cluster serves as cofactor.

The enzyme catalyses GTP + AH2 + S-adenosyl-L-methionine = (8S)-3',8-cyclo-7,8-dihydroguanosine 5'-triphosphate + 5'-deoxyadenosine + L-methionine + A + H(+). It participates in cofactor biosynthesis; molybdopterin biosynthesis. Its function is as follows. Catalyzes the cyclization of GTP to (8S)-3',8-cyclo-7,8-dihydroguanosine 5'-triphosphate. The polypeptide is GTP 3',8-cyclase (Rhodopseudomonas palustris (strain TIE-1)).